Consider the following 160-residue polypeptide: Cytochrome b6-f complex subunit 4 (160 aa).

Transmembrane regions (helical) follow at residues 36–56 (LLYVFPVVIIGTFACSIGLAI), 95–115 (LLGVLSMAAVPAGLLTVPFIE), and 131–151 (TVFLIGTVVSIWLGIGATMPI).

Belongs to the cytochrome b family. PetD subfamily. In terms of assembly, the 4 large subunits of the cytochrome b6-f complex are cytochrome b6, subunit IV (17 kDa polypeptide, petD), cytochrome f and the Rieske protein, while the 4 small subunits are petG, petL, petM and petN. The complex functions as a dimer.

It localises to the plastid. It is found in the chloroplast thylakoid membrane. In terms of biological role, component of the cytochrome b6-f complex, which mediates electron transfer between photosystem II (PSII) and photosystem I (PSI), cyclic electron flow around PSI, and state transitions. The polypeptide is Cytochrome b6-f complex subunit 4 (Pyropia yezoensis (Susabi-nori)).